A 208-amino-acid chain; its full sequence is MIVELSHPLIKHKVNTARIQDTSAEKLRKTLKELGFMLVYEALKDILLEEKEVRTWIGNKRFNYLNEEEIVFVPILRAGLSFLEGALQVVPNAKVGFLGIKRNEETLESHIYYSRLPELKGKIVVILDPMLATGGTLEVALREILKHSPLKVKSVHAIAAPEGLKRIEEKFKEVEIFVGNVDERLNDKGYIIPGLGDIGDRLYAVSVY.

5-phospho-alpha-D-ribose 1-diphosphate is bound by residues arginine 77, arginine 102, and 128–136; that span reads DPMLATGGT. Uracil-binding positions include isoleucine 191 and 196–198; that span reads GDI. Position 197 (aspartate 197) interacts with 5-phospho-alpha-D-ribose 1-diphosphate.

It belongs to the UPRTase family. Mg(2+) serves as cofactor.

It carries out the reaction UMP + diphosphate = 5-phospho-alpha-D-ribose 1-diphosphate + uracil. Its pathway is pyrimidine metabolism; UMP biosynthesis via salvage pathway; UMP from uracil: step 1/1. Allosterically activated by GTP. Its function is as follows. Catalyzes the conversion of uracil and 5-phospho-alpha-D-ribose 1-diphosphate (PRPP) to UMP and diphosphate. This Aquifex aeolicus (strain VF5) protein is Uracil phosphoribosyltransferase.